A 763-amino-acid polypeptide reads, in one-letter code: Probable ubiquitin carboxyl-terminal hydrolase MINDY-4 (763 aa).

The residue at position 143 (Ser-143) is a Phosphoserine. The disordered stretch occupies residues 154 to 368; sequence SSKRSSHKSR…SQPASLRKNQ (215 aa). Over residues 180–202 the composition is skewed to basic and acidic residues; sequence EKTDKLPMSEPSLDTKRMGEKVR. Phosphoserine is present on residues Ser-220 and Ser-224. The segment covering 252 to 261 has biased composition (polar residues); that stretch reads ELSTHTSTCP. The segment covering 267–278 has biased composition (low complexity); the sequence is PASSTASTSRSP. Ser-296 is modified (phosphoserine). The span at 346–355 shows a compositional bias: basic and acidic residues; that stretch reads TQERPERAFE. Residues 357 to 368 are compositionally biased toward polar residues; sequence QGSQPASLRKNQ. Cys-463 (nucleophile) is an active-site residue. The active-site Proton acceptor is His-683.

It belongs to the MINDY deubiquitinase family. FAM188 subfamily.

It carries out the reaction Thiol-dependent hydrolysis of ester, thioester, amide, peptide and isopeptide bonds formed by the C-terminal Gly of ubiquitin (a 76-residue protein attached to proteins as an intracellular targeting signal).. Its function is as follows. Probable hydrolase that can remove 'Lys-48'-linked conjugated ubiquitin from proteins. This is Probable ubiquitin carboxyl-terminal hydrolase MINDY-4 (MINDY4) from Bos taurus (Bovine).